Here is a 164-residue protein sequence, read N- to C-terminus: NADH-quinone oxidoreductase subunit I 2 (164 aa).

4Fe-4S ferredoxin-type domains follow at residues 39 to 71 (IVLT…VVKA) and 81 to 110 (ESFR…LTPD). Residues C51, C54, C57, C61, C90, C93, C96, and C100 each coordinate [4Fe-4S] cluster.

Belongs to the complex I 23 kDa subunit family. NDH-1 is composed of 14 different subunits. Subunits NuoA, H, J, K, L, M, N constitute the membrane sector of the complex. It depends on [4Fe-4S] cluster as a cofactor.

Its subcellular location is the cell inner membrane. It catalyses the reaction a quinone + NADH + 5 H(+)(in) = a quinol + NAD(+) + 4 H(+)(out). Its function is as follows. NDH-1 shuttles electrons from NADH, via FMN and iron-sulfur (Fe-S) centers, to quinones in the respiratory chain. The immediate electron acceptor for the enzyme in this species is believed to be ubiquinone. Couples the redox reaction to proton translocation (for every two electrons transferred, four hydrogen ions are translocated across the cytoplasmic membrane), and thus conserves the redox energy in a proton gradient. The sequence is that of NADH-quinone oxidoreductase subunit I 2 from Cereibacter sphaeroides (strain ATCC 17023 / DSM 158 / JCM 6121 / CCUG 31486 / LMG 2827 / NBRC 12203 / NCIMB 8253 / ATH 2.4.1.) (Rhodobacter sphaeroides).